The chain runs to 209 residues: MGKVHVFDHPLIQHKMSYIRDANTGTKEFRELVDEVGMLMAYEVTRDLELQDVEIETPVTKTTAKRLSGKKLAFVPILRAGLGMTQGILSLIPAARVGHVGLYRDPETLEAVEYFVKLPQDIEEREIVVVDPMLATGASAIEAINSLKNRGAKNIRFMCLIAALEGVEKLQEAHPDVDIFIAALDEKLNDKAYITPGLGDAGDRLFGTK.

5-phospho-alpha-D-ribose 1-diphosphate is bound by residues Arg79, Arg104, and 131–139 (DPMLATGAS). Residues Ile194 and 199 to 201 (GDA) each bind uracil. Asp200 provides a ligand contact to 5-phospho-alpha-D-ribose 1-diphosphate.

This sequence belongs to the UPRTase family. Mg(2+) serves as cofactor.

The enzyme catalyses UMP + diphosphate = 5-phospho-alpha-D-ribose 1-diphosphate + uracil. Its pathway is pyrimidine metabolism; UMP biosynthesis via salvage pathway; UMP from uracil: step 1/1. Allosterically activated by GTP. In terms of biological role, catalyzes the conversion of uracil and 5-phospho-alpha-D-ribose 1-diphosphate (PRPP) to UMP and diphosphate. The protein is Uracil phosphoribosyltransferase of Staphylococcus carnosus (strain TM300).